Reading from the N-terminus, the 249-residue chain is Transcription factor MYB90 (249 aa).

2 HTH myb-type domains span residues 5–57 (SKGL…LNYL) and 58–112 (KPSI…SKKH). DNA-binding regions (H-T-H motif) lie at residues 33 to 57 (WHQV…LNYL) and 85 to 108 (WSLI…NTHL).

Interacts with BHLH12/MYC1, BHLH1/GL3/MYC6, BHLH2/EGL3/MYC146, and BHLH42/TT8. As to expression, expressed only in leaves and siliques.

The protein resides in the nucleus. Transcription activator, when associated with BHLH12/MYC1, EGL3, or GL3. Promotes the synthesis of phenylpropanoid-derived compounds such as anthocyanins. This chain is Transcription factor MYB90 (MYB90), found in Arabidopsis thaliana (Mouse-ear cress).